Reading from the N-terminus, the 68-residue chain is Protein VNG_1110C (68 aa).

This chain is Protein VNG_1110C, found in Halobacterium salinarum (strain ATCC 700922 / JCM 11081 / NRC-1) (Halobacterium halobium).